Reading from the N-terminus, the 440-residue chain is GTPase Der (440 aa).

EngA-type G domains follow at residues 4-169 (PVVA…PEED) and 178-353 (IKVA…DQAA). GTP contacts are provided by residues 10-17 (GRPNVGKS), 57-61 (DTGGI), 120-123 (NKVD), 184-191 (GKPNVGKS), 231-235 (DTAGI), and 296-299 (NKWD). One can recognise a KH-like domain in the interval 354–438 (MRISTGVLND…PIKFILREKE (85 aa)).

This sequence belongs to the TRAFAC class TrmE-Era-EngA-EngB-Septin-like GTPase superfamily. EngA (Der) GTPase family. In terms of assembly, associates with the 50S ribosomal subunit.

Its function is as follows. GTPase that plays an essential role in the late steps of ribosome biogenesis. The chain is GTPase Der from Acetivibrio thermocellus (strain ATCC 27405 / DSM 1237 / JCM 9322 / NBRC 103400 / NCIMB 10682 / NRRL B-4536 / VPI 7372) (Clostridium thermocellum).